The following is a 322-amino-acid chain: Ras association domain-containing protein 4 (322 aa).

The tract at residues 96-161 is disordered; it reads EASPQDSKVP…SKSRAPSEAQ (66 aa). Ser142 is subject to Phosphoserine. The 90-residue stretch at 175–264 folds into the Ras-associating domain; that stretch reads YNHKTSVFTP…KIFLMEADLS (90 aa). Residues 271–318 enclose the SARAH domain; the sequence is VAQYIKFEMPVLDSFVEKLKEEEEREIIKLTMKFQALRLTMLQRLEQL.

As to quaternary structure, interacts directly with activated KRAS in a GTP-dependent manner.

Potential tumor suppressor. May act as a KRAS effector protein. May promote apoptosis and cell cycle arrest. The polypeptide is Ras association domain-containing protein 4 (Rassf4) (Mus musculus (Mouse)).